The sequence spans 497 residues: Cobyric acid synthase (497 aa).

The 193-residue stretch at 251-443 (DLKIGVVWYP…LHGLFDNDFF (193 aa)) folds into the GATase cobBQ-type domain. Residue cysteine 333 is the Nucleophile of the active site. The active site involves histidine 435.

Belongs to the CobB/CobQ family. CobQ subfamily.

It functions in the pathway cofactor biosynthesis; adenosylcobalamin biosynthesis. Its function is as follows. Catalyzes amidations at positions B, D, E, and G on adenosylcobyrinic A,C-diamide. NH(2) groups are provided by glutamine, and one molecule of ATP is hydrogenolyzed for each amidation. This is Cobyric acid synthase from Carboxydothermus hydrogenoformans (strain ATCC BAA-161 / DSM 6008 / Z-2901).